A 350-amino-acid chain; its full sequence is Protein RecA (350 aa).

Residue 66–73 (GPESSGKT) coordinates ATP.

It belongs to the RecA family.

The protein localises to the cytoplasm. Can catalyze the hydrolysis of ATP in the presence of single-stranded DNA, the ATP-dependent uptake of single-stranded DNA by duplex DNA, and the ATP-dependent hybridization of homologous single-stranded DNAs. It interacts with LexA causing its activation and leading to its autocatalytic cleavage. The polypeptide is Protein RecA (Nocardioides sp. (strain ATCC BAA-499 / JS614)).